Consider the following 508-residue polypeptide: Photosystem II CP47 reaction center protein (508 aa).

6 consecutive transmembrane segments (helical) span residues 21–36 (SVHI…WAGS), 101–115 (IVFS…IWHW), 140–156 (GIHL…FGAF), 203–218 (IAAG…FHLS), 237–252 (VLSS…AFVV), and 457–472 (SFAL…HGAR).

Belongs to the PsbB/PsbC family. PsbB subfamily. In terms of assembly, PSII is composed of 1 copy each of membrane proteins PsbA, PsbB, PsbC, PsbD, PsbE, PsbF, PsbH, PsbI, PsbJ, PsbK, PsbL, PsbM, PsbT, PsbX, PsbY, PsbZ, Psb30/Ycf12, at least 3 peripheral proteins of the oxygen-evolving complex and a large number of cofactors. It forms dimeric complexes. The cofactor is Binds multiple chlorophylls. PSII binds additional chlorophylls, carotenoids and specific lipids..

Its subcellular location is the plastid. The protein resides in the chloroplast thylakoid membrane. In terms of biological role, one of the components of the core complex of photosystem II (PSII). It binds chlorophyll and helps catalyze the primary light-induced photochemical processes of PSII. PSII is a light-driven water:plastoquinone oxidoreductase, using light energy to abstract electrons from H(2)O, generating O(2) and a proton gradient subsequently used for ATP formation. The sequence is that of Photosystem II CP47 reaction center protein from Olimarabidopsis pumila (Dwarf rocket).